A 330-amino-acid chain; its full sequence is Putative [LysW]-L-2-aminoadipate/[LysW]-L-glutamate phosphate reductase (330 aa).

Residues 10 to 13 (SGYI) and 34 to 36 (SRR) contribute to the NADP(+) site. The active site involves Cys142. Asn297 is an NADP(+) binding site.

Belongs to the NAGSA dehydrogenase family. Type 1 subfamily. LysY sub-subfamily.

The protein resides in the cytoplasm. It carries out the reaction [amino-group carrier protein]-C-terminal-N-(1-carboxy-5-oxopentan-1-yl)-L-glutamine + phosphate + NADP(+) = [amino-group carrier protein]-C-terminal-N-(1-carboxy-5-phosphooxy-5-oxopentan-1-yl)-L-glutamine + NADPH + H(+). It catalyses the reaction [amino-group carrier protein]-C-terminal-gamma-(L-glutamyl-5-semialdehyde)-L-glutamate + phosphate + NADP(+) = [amino-group carrier protein]-C-terminal-gamma-(5-phospho-L-glutamyl)-L-glutamate + NADPH + H(+). It functions in the pathway amino-acid biosynthesis; L-lysine biosynthesis via AAA pathway; L-lysine from L-alpha-aminoadipate (Thermus route): step 3/5. It participates in amino-acid biosynthesis; L-arginine biosynthesis. Functionally, involved in both the arginine and lysine biosynthetic pathways. In Thermococcus kodakarensis (strain ATCC BAA-918 / JCM 12380 / KOD1) (Pyrococcus kodakaraensis (strain KOD1)), this protein is Putative [LysW]-L-2-aminoadipate/[LysW]-L-glutamate phosphate reductase.